The chain runs to 184 residues: Small ribosomal subunit protein bS16 (184 aa).

Residues 150–160 show a composition bias toward basic and acidic residues; the sequence is KKAAEAAEKAA. Residues 150–184 are disordered; it reads KKAAEAAEKAAAEAPAEEATEAPAEEAAATEAAAE. Residues 164-173 are compositionally biased toward acidic residues; that stretch reads PAEEATEAPA. A compositionally biased stretch (low complexity) spans 174 to 184; the sequence is EEAAATEAAAE.

This sequence belongs to the bacterial ribosomal protein bS16 family.

This is Small ribosomal subunit protein bS16 from Bacteroides thetaiotaomicron (strain ATCC 29148 / DSM 2079 / JCM 5827 / CCUG 10774 / NCTC 10582 / VPI-5482 / E50).